A 259-amino-acid chain; its full sequence is UPF0246 protein Pfl01_0961 (259 aa).

The protein belongs to the UPF0246 family.

The protein is UPF0246 protein Pfl01_0961 of Pseudomonas fluorescens (strain Pf0-1).